The sequence spans 488 residues: Acetyl-coenzyme A carboxylase carboxyl transferase subunit beta, chloroplastic (488 aa).

The CoA carboxyltransferase N-terminal domain maps to 227-488 (LWIQCDNCYG…LHAFFPLNTN (262 aa)). Zn(2+)-binding residues include Cys-231, Cys-234, Cys-247, and Cys-250. A C4-type zinc finger spans residues 231–250 (CDNCYGLMYKKVKMNVCEQC).

It belongs to the AccD/PCCB family. Acetyl-CoA carboxylase is a heterohexamer composed of biotin carboxyl carrier protein, biotin carboxylase and 2 subunits each of ACCase subunit alpha and ACCase plastid-coded subunit beta (accD). Requires Zn(2+) as cofactor. In terms of tissue distribution, accumulates in fatty acids synthesizing tissues such as embryos, expanding leaves, flower buds, flowers, and developing siliques.

It localises to the plastid. Its subcellular location is the chloroplast membrane. The protein localises to the chloroplast stroma. It carries out the reaction N(6)-carboxybiotinyl-L-lysyl-[protein] + acetyl-CoA = N(6)-biotinyl-L-lysyl-[protein] + malonyl-CoA. The protein operates within lipid metabolism; malonyl-CoA biosynthesis; malonyl-CoA from acetyl-CoA: step 1/1. In terms of biological role, component of the acetyl coenzyme A carboxylase (ACC) complex. Biotin carboxylase (BC) catalyzes the carboxylation of biotin on its carrier protein (BCCP) and then the CO(2) group is transferred by the transcarboxylase to acetyl-CoA to form malonyl-CoA. The protein is Acetyl-coenzyme A carboxylase carboxyl transferase subunit beta, chloroplastic of Arabidopsis thaliana (Mouse-ear cress).